A 217-amino-acid polypeptide reads, in one-letter code: Guanylate kinase (217 aa).

One can recognise a Guanylate kinase-like domain in the interval 15 to 194 (GLMLVLSSPS…AYQRLKRILL (180 aa)). 22–29 (SPSGAGKT) contributes to the ATP binding site.

The protein belongs to the guanylate kinase family.

The protein localises to the cytoplasm. It carries out the reaction GMP + ATP = GDP + ADP. Functionally, essential for recycling GMP and indirectly, cGMP. The sequence is that of Guanylate kinase from Hyphomonas neptunium (strain ATCC 15444).